A 601-amino-acid polypeptide reads, in one-letter code: Proline--tRNA ligase (601 aa).

Belongs to the class-II aminoacyl-tRNA synthetase family. ProS type 1 subfamily. As to quaternary structure, homodimer.

It is found in the cytoplasm. The enzyme catalyses tRNA(Pro) + L-proline + ATP = L-prolyl-tRNA(Pro) + AMP + diphosphate. Its function is as follows. Catalyzes the attachment of proline to tRNA(Pro) in a two-step reaction: proline is first activated by ATP to form Pro-AMP and then transferred to the acceptor end of tRNA(Pro). As ProRS can inadvertently accommodate and process non-cognate amino acids such as alanine and cysteine, to avoid such errors it has two additional distinct editing activities against alanine. One activity is designated as 'pretransfer' editing and involves the tRNA(Pro)-independent hydrolysis of activated Ala-AMP. The other activity is designated 'posttransfer' editing and involves deacylation of mischarged Ala-tRNA(Pro). The misacylated Cys-tRNA(Pro) is not edited by ProRS. The polypeptide is Proline--tRNA ligase (Tropheryma whipplei (strain TW08/27) (Whipple's bacillus)).